Here is a 182-residue protein sequence, read N- to C-terminus: Keratin, high-sulfur matrix protein, B2D (182 aa).

6 tandem repeats follow at residues 27-36 (PTCCQTSCCQ), 37-46 (PTSIQTSCCQ), 47-56 (PTSIQTSCCQ), 57-66 (PTSIQTSCCQ), 67-76 (PISIQTSCCQ), and 77-86 (PTCLQTSGCE). The segment at 27 to 86 (PTCCQTSCCQPTSIQTSCCQPTSIQTSCCQPTSIQTSCCQPISIQTSCCQPTCLQTSGCE) is 6 X 10 AA tandem repeats.

Functionally, the keratin products of mammalian epidermal derivatives such as wool and hair consist of microfibrils embedded in a rigid matrix of other proteins. The matrix proteins include the high-sulfur and high-tyrosine keratins, having molecular weights of 6-20 kDa, whereas the microfibrils contain the larger, low-sulfur keratins (40-56 kDa). This Ovis aries (Sheep) protein is Keratin, high-sulfur matrix protein, B2D.